Reading from the N-terminus, the 92-residue chain is Small ribosomal subunit protein uS19c (92 aa).

Belongs to the universal ribosomal protein uS19 family.

It localises to the plastid. The protein resides in the chloroplast. Functionally, protein S19 forms a complex with S13 that binds strongly to the 16S ribosomal RNA. In Marchantia polymorpha (Common liverwort), this protein is Small ribosomal subunit protein uS19c (rps19).